Here is a 168-residue protein sequence, read N- to C-terminus: RxLR effector protein CRE8 (168 aa).

An N-terminal signal peptide occupies residues 1 to 23; that stretch reads MRLPSILVVAASTLFLHYGYTSA. Positions 54–69 match the RxLR-dEER motif; that stretch reads RFLRDGKIAEGDNEER.

Belongs to the RxLR effector family.

The protein resides in the secreted. The protein localises to the host cell. In terms of biological role, effector that is involved in host plant infection. Contributes to virulence during the early infection stage, by inhibiting plant defense responses induced by both PAMP-triggered immunity (PTI) and effector-triggered immunity (ETI). The chain is RxLR effector protein CRE8 from Phytophthora infestans (strain T30-4) (Potato late blight agent).